The sequence spans 146 residues: Hemoglobin subunit beta (146 aa).

Residues 2-146 (HWSAEEKQLI…VAHALARKYH (145 aa)) form the Globin domain. Residues His63 and His92 each coordinate heme b.

This sequence belongs to the globin family. Heterotetramer of two alpha chains and two beta chains. Red blood cells.

Its function is as follows. Involved in oxygen transport from the lung to the various peripheral tissues. This Anser indicus (Bar-headed goose) protein is Hemoglobin subunit beta (HBB).